The chain runs to 1110 residues: RNA2 polyprotein (1110 aa).

This sequence belongs to the nepoviruses RNA2 polyprotein family. Specific enzymatic cleavages in vivo by the P1 encoded 3C-like protease yield mature proteins.

It localises to the host cell junction. The protein localises to the host plasmodesma. Its subcellular location is the host cytoplasm. It is found in the host nucleus. The protein resides in the virion. Its function is as follows. Implicated in RNA2 replication. Could also be required for nematode transmission of the virus. Transports viral genome to neighboring plant cells directly through plasmosdesmata, without any budding. The movement protein allows efficient cell to cell propagation, by bypassing the host cell wall barrier. Acts by forming a tubular structure at the host plasmodesmata, enlarging it enough to allow free passage of virion capsids. This Vitis vinifera (Grape) protein is RNA2 polyprotein.